We begin with the raw amino-acid sequence, 409 residues long: Glycogenin (409 aa).

The UDP site is built by Leu8, Tyr14, and Arg80. 11 residues coordinate UDP-alpha-D-glucose: Leu8, Tyr14, Arg80, Lys89, Asp105, Asp107, Asn140, Ser141, Asp169, Asp172, and Gln173. UDP contacts are provided by Asp105 and Asp107. Mn(2+) contacts are provided by Asp105 and Asp107. Tyr212 carries O-linked (Glc...) tyrosine glycosylation. The UDP site is built by His229, Gly232, and Lys235. Position 229 (His229) interacts with Mn(2+). Gly232 and Lys235 together coordinate UDP-alpha-D-glucose. The disordered stretch occupies residues 283 to 303 (RIEEDSHETEEKVDEEVSISE).

The protein belongs to the glycosyltransferase 8 family. Glycogenin subfamily. The cofactor is Mn(2+).

It localises to the cytoplasm. It is found in the vacuole. The enzyme catalyses L-tyrosyl-[glycogenin] + UDP-alpha-D-glucose = alpha-D-glucosyl-L-tyrosyl-[glycogenin] + UDP + H(+). It carries out the reaction [1,4-alpha-D-glucosyl](n)-L-tyrosyl-[glycogenin] + UDP-alpha-D-glucose = [1,4-alpha-D-glucosyl](n+1)-L-tyrosyl-[glycogenin] + UDP + H(+). Its function is as follows. Glycogenin participates in the glycogen biosynthetic process along with glycogen synthase and glycogen branching enzyme. It catalyzes the formation of a short alpha (1,4)-glucosyl chain covalently attached via a glucose 1-O-tyrosyl linkage to internal tyrosine residues and these chains act as primers for the elongation reaction catalyzed by glycogen synthase. This chain is Glycogenin, found in Komagataella phaffii (strain GS115 / ATCC 20864) (Yeast).